The chain runs to 362 residues: Phospho-N-acetylmuramoyl-pentapeptide-transferase (362 aa).

10 helical membrane passes run 28 to 48 (IISF…VITW), 72 to 92 (TPTM…MVCA), 94 to 114 (LSNI…ILGL), 131 to 151 (VLHK…IIFM), 169 to 189 (FMPQ…VGTS), 200 to 220 (GLAI…AWIS), 236 to 256 (FSGE…GFLW), 264 to 284 (IFMG…IAVL), 290 to 310 (LLLI…LQVI), and 339 to 359 (IIVR…ITLK).

The protein belongs to the glycosyltransferase 4 family. MraY subfamily. Mg(2+) serves as cofactor.

It localises to the cell inner membrane. The enzyme catalyses UDP-N-acetyl-alpha-D-muramoyl-L-alanyl-gamma-D-glutamyl-meso-2,6-diaminopimeloyl-D-alanyl-D-alanine + di-trans,octa-cis-undecaprenyl phosphate = di-trans,octa-cis-undecaprenyl diphospho-N-acetyl-alpha-D-muramoyl-L-alanyl-D-glutamyl-meso-2,6-diaminopimeloyl-D-alanyl-D-alanine + UMP. It participates in cell wall biogenesis; peptidoglycan biosynthesis. Functionally, catalyzes the initial step of the lipid cycle reactions in the biosynthesis of the cell wall peptidoglycan: transfers peptidoglycan precursor phospho-MurNAc-pentapeptide from UDP-MurNAc-pentapeptide onto the lipid carrier undecaprenyl phosphate, yielding undecaprenyl-pyrophosphoryl-MurNAc-pentapeptide, known as lipid I. The sequence is that of Phospho-N-acetylmuramoyl-pentapeptide-transferase from Blochmanniella pennsylvanica (strain BPEN).